A 1104-amino-acid chain; its full sequence is DNA polymerase delta catalytic subunit (1104 aa).

The tract at residues Met-1–Asp-60 is disordered. Over residues Asp-31–Asp-60 the composition is skewed to acidic residues. Zn(2+)-binding residues include Cys-1012, Cys-1015, Cys-1027, and Cys-1030. The segment at Cys-1012–Cys-1030 adopts a CysA-type zinc-finger fold. [4Fe-4S] cluster-binding residues include Cys-1059, Cys-1062, Cys-1072, and Cys-1077. A CysB motif motif is present at residues Cys-1059 to Cys-1077.

The protein belongs to the DNA polymerase type-B family. Heterotetramer composed of subunits of 125 kDa, 50 kDa, 66 kDa and 12 kDa. The 125 kDa subunit contains the polymerase active site and most likely the active site for the 3'-5' exonuclease activity. Requires [4Fe-4S] cluster as cofactor.

Its subcellular location is the nucleus. It catalyses the reaction DNA(n) + a 2'-deoxyribonucleoside 5'-triphosphate = DNA(n+1) + diphosphate. In terms of biological role, possesses two enzymatic activities: DNA synthesis (polymerase) and an exonucleolytic activity that degrades single stranded DNA in the 3'- to 5'-direction. The chain is DNA polymerase delta catalytic subunit (pold1) from Dictyostelium discoideum (Social amoeba).